A 130-amino-acid chain; its full sequence is Small ribosomal subunit protein uS9 (130 aa).

This sequence belongs to the universal ribosomal protein uS9 family.

This chain is Small ribosomal subunit protein uS9, found in Neisseria gonorrhoeae (strain ATCC 700825 / FA 1090).